The following is a 71-amino-acid chain: uncharacterized protein (71 aa).

2 helical membrane passes run 9–29 (FVIFSLFFTFISVSTFGNINF) and 41–61 (FVALFYIFTHTSFTSLCFFGL).

It is found in the membrane. This is an uncharacterized protein from Acheta domesticus (House cricket).